Consider the following 428-residue polypeptide: Adenosylhomocysteinase (428 aa).

Positions 62, 134, and 159 each coordinate substrate. 160–162 (TTT) serves as a coordination point for NAD(+). Substrate-binding residues include K189 and D193. NAD(+) is bound by residues N194, 223–228 (GYGWCG), E246, N281, 302–304 (SGH), and N349.

This sequence belongs to the adenosylhomocysteinase family. It depends on NAD(+) as a cofactor.

It is found in the cytoplasm. The enzyme catalyses S-adenosyl-L-homocysteine + H2O = L-homocysteine + adenosine. It functions in the pathway amino-acid biosynthesis; L-homocysteine biosynthesis; L-homocysteine from S-adenosyl-L-homocysteine: step 1/1. Functionally, may play a key role in the regulation of the intracellular concentration of adenosylhomocysteine. The sequence is that of Adenosylhomocysteinase from Gloeobacter violaceus (strain ATCC 29082 / PCC 7421).